The primary structure comprises 1798 residues: Non-reducing polyketide synthase nscA (1798 aa).

The tract at residues 25-256 (RRLDQHSKDR…PLPVYDGLCH (232 aa)) is N-terminal acylcarrier protein transacylase domain (SAT). A Ketosynthase family 3 (KS3) domain is found at 392–825 (SSKLAIVGMA…GGNTTLLLED (434 aa)). Catalysis depends on for beta-ketoacyl synthase activity residues Cys565, His700, and His743. The malonyl-CoA:ACP transacylase (MAT) domain stretch occupies residues 931-1224 (FTGQGAYYHG…LVRSMIPSAP (294 aa)). An N-terminal hotdog fold region spans residues 1322–1458 (HQITAETVRT…ATILFEDPGA (137 aa)). The PKS/mFAS DH domain occupies 1322 to 1632 (HQITAETVRT…FRRVPRLLMD (311 aa)). The active-site Proton acceptor; for dehydratase activity is the His1354. The segment at 1390 to 1628 (HMNLTDVEVL…GMIRFRRVPR (239 aa)) is product template (PT) domain. The C-terminal hotdog fold stretch occupies residues 1486 to 1632 (ASRLSKPLAY…FRRVPRLLMD (147 aa)). Asp1543 acts as the Proton donor; for dehydratase activity in catalysis. Residues 1695–1721 (LLATSSGDSTPKEPPIVTPAESERAGP) are disordered. The Carrier domain maps to 1721 to 1798 (PVDNNMISQC…EMTAWIEEYC (78 aa)). Position 1758 is an O-(pantetheine 4'-phosphoryl)serine (Ser1758).

The cofactor is pantetheine 4'-phosphate.

Its pathway is secondary metabolite biosynthesis. In terms of biological role, non-reducing polyketide synthase; part of the gene cluster that mediates the biosynthesis of neosartoricin B, a prenylated anthracenone that probably exhibits T-cell antiproliferative activity, suggestive of a physiological role as an immunosuppressive agent. The non-reducing polyketide synthase nscA probably synthesizes and cyclizes the decaketide backbone. The hydrolase nscB then mediates the product release through hydrolysis followed by spontaneous decarboxylation. The prenyltransferase nscD catalyzes the addition of the dimethylallyl group to the aromatic C5. The FAD-dependent monooxygenase nscC is then responsible for the stereospecific hydroxylation at C2. Neosartoricin B can be converted into two additional compounds neosartoricins C and D. Neosartoricin C is a spirocyclic compound that is cyclized through the attack of C3 hydroxyl on C14, followed by dehydration. On the other hand, neosartoricin D is a further cyclized compound in which attack of C2 on C14 in neosartoricin C results in the formation of the acetal-containing dioxabicyclo-octanone ring. Both of these compounds are novel and possibly represent related metabolites of the gene cluster. This chain is Non-reducing polyketide synthase nscA, found in Trichophyton rubrum (strain ATCC MYA-4607 / CBS 118892) (Athlete's foot fungus).